We begin with the raw amino-acid sequence, 336 residues long: Holliday junction branch migration complex subunit RuvB (336 aa).

A large ATPase domain (RuvB-L) region spans residues 4–185 (MDERLLSGES…FGVLSRLEYY (182 aa)). Residues Leu24, Arg25, Gly66, Lys69, Thr70, Thr71, 132–134 (EDF), Arg175, Tyr185, and Arg222 each bind ATP. Thr70 is a binding site for Mg(2+). The interval 186–256 (TVDQLSAIVE…ITQMALELLQ (71 aa)) is small ATPAse domain (RuvB-S). Residues 259–336 (KLGLDHIDHK…EHFGMEMPKV (78 aa)) form a head domain (RuvB-H) region. DNA is bound by residues Arg314 and Arg319.

This sequence belongs to the RuvB family. Homohexamer. Forms an RuvA(8)-RuvB(12)-Holliday junction (HJ) complex. HJ DNA is sandwiched between 2 RuvA tetramers; dsDNA enters through RuvA and exits via RuvB. An RuvB hexamer assembles on each DNA strand where it exits the tetramer. Each RuvB hexamer is contacted by two RuvA subunits (via domain III) on 2 adjacent RuvB subunits; this complex drives branch migration. In the full resolvosome a probable DNA-RuvA(4)-RuvB(12)-RuvC(2) complex forms which resolves the HJ.

The protein resides in the cytoplasm. It catalyses the reaction ATP + H2O = ADP + phosphate + H(+). Functionally, the RuvA-RuvB-RuvC complex processes Holliday junction (HJ) DNA during genetic recombination and DNA repair, while the RuvA-RuvB complex plays an important role in the rescue of blocked DNA replication forks via replication fork reversal (RFR). RuvA specifically binds to HJ cruciform DNA, conferring on it an open structure. The RuvB hexamer acts as an ATP-dependent pump, pulling dsDNA into and through the RuvAB complex. RuvB forms 2 homohexamers on either side of HJ DNA bound by 1 or 2 RuvA tetramers; 4 subunits per hexamer contact DNA at a time. Coordinated motions by a converter formed by DNA-disengaged RuvB subunits stimulates ATP hydrolysis and nucleotide exchange. Immobilization of the converter enables RuvB to convert the ATP-contained energy into a lever motion, pulling 2 nucleotides of DNA out of the RuvA tetramer per ATP hydrolyzed, thus driving DNA branch migration. The RuvB motors rotate together with the DNA substrate, which together with the progressing nucleotide cycle form the mechanistic basis for DNA recombination by continuous HJ branch migration. Branch migration allows RuvC to scan DNA until it finds its consensus sequence, where it cleaves and resolves cruciform DNA. This chain is Holliday junction branch migration complex subunit RuvB, found in Bacillus cereus (strain ZK / E33L).